A 192-amino-acid chain; its full sequence is Lipid A acyltransferase PagP (192 aa).

Positions 1 to 26 (MTVVNKSFLTILIFFCQILFPLNASA) are cleaved as a signal peptide. Active-site residues include histidine 64, aspartate 107, and serine 108.

Belongs to the lipid A palmitoyltransferase family. Homodimer.

The protein resides in the cell outer membrane. It carries out the reaction a lipid A + a 1,2-diacyl-sn-glycero-3-phosphocholine = a hepta-acyl lipid A + a 2-acyl-sn-glycero-3-phosphocholine. The enzyme catalyses a lipid IVA + a 1,2-diacyl-sn-glycero-3-phosphocholine = a lipid IVB + a 2-acyl-sn-glycero-3-phosphocholine. It catalyses the reaction a lipid IIA + a 1,2-diacyl-sn-glycero-3-phosphocholine = a lipid IIB + a 2-acyl-sn-glycero-3-phosphocholine. Its function is as follows. Transfers a fatty acid residue from the sn-1 position of a phospholipid to the N-linked hydroxyfatty acid chain on the proximal unit of lipid A or its precursors. The sequence is that of Lipid A acyltransferase PagP from Cronobacter sakazakii (strain ATCC BAA-894) (Enterobacter sakazakii).